A 174-amino-acid polypeptide reads, in one-letter code: Streptothricin acetyltransferase (174 aa).

The 151-residue stretch at 20–170 folds into the N-acetyltransferase domain; sequence FIVREVFDVH…AMYWYWFSGA (151 aa).

Belongs to the acetyltransferase family. GNAT subfamily.

The catalysed reaction is streptothricin F + acetyl-CoA = N(beta)-acetylstreptothricin F + CoA + H(+). Its function is as follows. Involved in resistance to streptothricin, a broad-spectrum antibiotic produced by streptomycetes. Detoxifies streptothricin via acetylation of the beta amino group of the first beta-lysyl moiety of streptothricin. The polypeptide is Streptothricin acetyltransferase (sat-1) (Escherichia coli).